Reading from the N-terminus, the 472-residue chain is NADH-quinone oxidoreductase subunit N (472 aa).

The next 14 membrane-spanning stretches (helical) occupy residues L5–L25, A36–I56, I77–P97, F103–L123, L126–G146, L158–L178, L197–F217, P229–V249, W264–I284, M292–M309, I319–A339, A363–V383, G396–L416, and L441–A461.

This sequence belongs to the complex I subunit 2 family. NDH-1 is composed of 14 different subunits. Subunits NuoA, H, J, K, L, M, N constitute the membrane sector of the complex.

The protein localises to the cell membrane. The enzyme catalyses a quinone + NADH + 5 H(+)(in) = a quinol + NAD(+) + 4 H(+)(out). In terms of biological role, NDH-1 shuttles electrons from NADH, via FMN and iron-sulfur (Fe-S) centers, to quinones in the respiratory chain. The immediate electron acceptor for the enzyme in this species is believed to be a menaquinone. Couples the redox reaction to proton translocation (for every two electrons transferred, four hydrogen ions are translocated across the cytoplasmic membrane), and thus conserves the redox energy in a proton gradient. This Heliobacterium modesticaldum (strain ATCC 51547 / Ice1) protein is NADH-quinone oxidoreductase subunit N.